Reading from the N-terminus, the 478-residue chain is Protein nucleotidyltransferase YdiU (478 aa).

Positions 84, 86, 87, 107, 119, 120, 170, and 177 each coordinate ATP. Asp-246 (proton acceptor) is an active-site residue. Residues Asn-247 and Asp-256 each coordinate Mg(2+). Position 256 (Asp-256) interacts with ATP.

The protein belongs to the SELO family. Requires Mg(2+) as cofactor. Mn(2+) serves as cofactor.

The catalysed reaction is L-seryl-[protein] + ATP = 3-O-(5'-adenylyl)-L-seryl-[protein] + diphosphate. It carries out the reaction L-threonyl-[protein] + ATP = 3-O-(5'-adenylyl)-L-threonyl-[protein] + diphosphate. The enzyme catalyses L-tyrosyl-[protein] + ATP = O-(5'-adenylyl)-L-tyrosyl-[protein] + diphosphate. It catalyses the reaction L-histidyl-[protein] + UTP = N(tele)-(5'-uridylyl)-L-histidyl-[protein] + diphosphate. The catalysed reaction is L-seryl-[protein] + UTP = O-(5'-uridylyl)-L-seryl-[protein] + diphosphate. It carries out the reaction L-tyrosyl-[protein] + UTP = O-(5'-uridylyl)-L-tyrosyl-[protein] + diphosphate. Nucleotidyltransferase involved in the post-translational modification of proteins. It can catalyze the addition of adenosine monophosphate (AMP) or uridine monophosphate (UMP) to a protein, resulting in modifications known as AMPylation and UMPylation. The polypeptide is Protein nucleotidyltransferase YdiU (Escherichia coli (strain ATCC 8739 / DSM 1576 / NBRC 3972 / NCIMB 8545 / WDCM 00012 / Crooks)).